A 386-amino-acid polypeptide reads, in one-letter code: MAIKKMTDLNLAGKRVLIREDLNVPVKDGKVSSDARIRASLPTIKAAKDAGAKVMLMSHLGRPEEGVYDEASSMKPVAEHLGTLLGQEVRLIKDYLDGVEVADGEVVLFENVRFNKGEKKDNEELARQYAALCDIYVMDAFGTAHRAQASTHGVARFAPEACAGPLLAAELEALGKALDNPAKPVVAIVGGSKVSTKLDVLNALEKVCDQIIVGGGIANTFLAAAGHPVGKSLCEHDLIDTAKDIASRVEIPLPVDVVVASEFAETATATTKNISDVSDDDMILDVGPETAGQFAELLKNAKTILWNGPVGVFEFDQFGNGTKALAQAIAESDAFSLAGGGDTVAAVDKYGVADKISYISTGGGAFLEFVEGKTLPAVAVLEERGD.

Substrate is bound by residues 21 to 23 (DLN), Arg-36, 59 to 62 (HLGR), Arg-113, and Arg-146. Residues Lys-197, Glu-314, and 340-343 (GGDT) each bind ATP.

This sequence belongs to the phosphoglycerate kinase family. In terms of assembly, monomer.

The protein localises to the cytoplasm. The catalysed reaction is (2R)-3-phosphoglycerate + ATP = (2R)-3-phospho-glyceroyl phosphate + ADP. The protein operates within carbohydrate degradation; glycolysis; pyruvate from D-glyceraldehyde 3-phosphate: step 2/5. The polypeptide is Phosphoglycerate kinase (Marinobacter nauticus (strain ATCC 700491 / DSM 11845 / VT8) (Marinobacter aquaeolei)).